The primary structure comprises 503 residues: Betaine aldehyde dehydrogenase 2 (503 aa).

A betaine aldehyde-binding site is contributed by 161–170; the sequence is WNYPLLMATW. 238–243 provides a ligand contact to NAD(+); the sequence is GSYETG. Residues Glu260, 292–295, and Cys453 contribute to the betaine aldehyde site; that span reads QICS. Residues Glu260 and Cys294 contribute to the active site. 4-aminobutanal contacts are provided by residues 260–261 and Cys294; that span reads EL. Trp459 provides a ligand contact to 4-aminobutanal. Positions 501 to 503 match the Microbody targeting signal motif; it reads SKL.

The protein belongs to the aldehyde dehydrogenase family. In terms of assembly, homodimer.

The protein resides in the peroxisome. The protein localises to the cytoplasm. The catalysed reaction is betaine aldehyde + NAD(+) + H2O = glycine betaine + NADH + 2 H(+). Its pathway is amine and polyamine biosynthesis; betaine biosynthesis via choline pathway; betaine from betaine aldehyde: step 1/1. Dehydrogenase that can use N-acetyl-c-aminobutyraldehyde (NAGABald), gamma-guanidinobutyraldehyde (GGBald), betaine aldehyde (Bet-ald), gamma-aminobutyraldehyde (GAB-ald), acetaldehyde, 4-aminobutylaldehyde (AB-ald), 3-aminopropionaldehyde (AP-ald), 4-N-trimethylaminobutyraldehyde (TMAB-ald) and 3-N-trimethylaminopropionaldehyde (TMAP-ald) as substrates. Catalyzes the oxidation of GAB-ald more efficiently than Bet-ald. Mediates the conversion of GAB-ald into gamma-aminobutyric acid (GABA), and prevents the formation of 2-acetyl-1-pyrroline (2AP) which gives fragrant rice its aromatic properties. This is Betaine aldehyde dehydrogenase 2 (BADH2) from Oryza sativa subsp. indica (Rice).